The sequence spans 547 residues: Cytochrome P450 monooxygenase 128 (547 aa).

A helical transmembrane segment spans residues 9 to 25; the sequence is IPWAAGATLLAWAAYKI. Residues asparagine 336 and asparagine 438 are each glycosylated (N-linked (GlcNAc...) asparagine). Residue cysteine 483 coordinates heme.

This sequence belongs to the cytochrome P450 family. The cofactor is heme.

The protein resides in the membrane. Its pathway is secondary metabolite biosynthesis. Cytochrome P450 monooxygenase that is able to use 7-ethoxycoumarin and testosterone as substrates for oxidation. The protein is Cytochrome P450 monooxygenase 128 of Postia placenta (strain ATCC 44394 / Madison 698-R) (Brown rot fungus).